The sequence spans 253 residues: Hydroxyacylglutathione hydrolase (253 aa).

7 residues coordinate Zn(2+): His59, His61, Asp63, His64, His118, Asp143, and His181.

This sequence belongs to the metallo-beta-lactamase superfamily. Glyoxalase II family. As to quaternary structure, monomer. It depends on Zn(2+) as a cofactor.

The enzyme catalyses an S-(2-hydroxyacyl)glutathione + H2O = a 2-hydroxy carboxylate + glutathione + H(+). It functions in the pathway secondary metabolite metabolism; methylglyoxal degradation; (R)-lactate from methylglyoxal: step 2/2. Thiolesterase that catalyzes the hydrolysis of S-D-lactoyl-glutathione to form glutathione and D-lactic acid. The polypeptide is Hydroxyacylglutathione hydrolase (Prochlorococcus marinus (strain MIT 9211)).